We begin with the raw amino-acid sequence, 509 residues long: Maturase K (509 aa).

Belongs to the intron maturase 2 family. MatK subfamily.

Its subcellular location is the plastid. It localises to the chloroplast. Functionally, usually encoded in the trnK tRNA gene intron. Probably assists in splicing its own and other chloroplast group II introns. The polypeptide is Maturase K (Avicennia marina (Grey mangrove)).